A 166-amino-acid chain; its full sequence is Small ribosomal subunit protein uS5 (166 aa).

Residues 11 to 74 (LQEKLIAVNR…EQAKRNLNKV (64 aa)) enclose the S5 DRBM domain.

It belongs to the universal ribosomal protein uS5 family. Part of the 30S ribosomal subunit. Contacts proteins S4 and S8.

Its function is as follows. With S4 and S12 plays an important role in translational accuracy. In terms of biological role, located at the back of the 30S subunit body where it stabilizes the conformation of the head with respect to the body. This chain is Small ribosomal subunit protein uS5, found in Aeromonas hydrophila subsp. hydrophila (strain ATCC 7966 / DSM 30187 / BCRC 13018 / CCUG 14551 / JCM 1027 / KCTC 2358 / NCIMB 9240 / NCTC 8049).